Consider the following 378-residue polypeptide: Quinolinate synthase (378 aa).

2 residues coordinate iminosuccinate: His-59 and Ser-80. Cys-125 contacts [4Fe-4S] cluster. Residues 151 to 153 and Ser-168 contribute to the iminosuccinate site; that span reads YAN. Cys-212 is a binding site for [4Fe-4S] cluster. Residues 238–240 and Thr-255 contribute to the iminosuccinate site; that span reads HPE. Cys-309 lines the [4Fe-4S] cluster pocket.

The protein belongs to the quinolinate synthase family. Type 1 subfamily. The cofactor is [4Fe-4S] cluster.

It localises to the cytoplasm. The enzyme catalyses iminosuccinate + dihydroxyacetone phosphate = quinolinate + phosphate + 2 H2O + H(+). Its pathway is cofactor biosynthesis; NAD(+) biosynthesis; quinolinate from iminoaspartate: step 1/1. Catalyzes the condensation of iminoaspartate with dihydroxyacetone phosphate to form quinolinate. The protein is Quinolinate synthase of Burkholderia pseudomallei (strain 668).